We begin with the raw amino-acid sequence, 289 residues long: DDRGK domain-containing protein 1 (289 aa).

The Lumenal portion of the chain corresponds to 1–2 (MD). Residues 3–23 (PFILAAIISGIVIIILSIAFL) form a helical membrane-spanning segment. Over 24-289 (RVSQVKPQAA…LINLAPVTVP (266 aa)) the chain is Cytoplasmic. Residues 65–168 (RHQAALEEEP…DERKKREQEE (104 aa)) form a disordered region. Over residues 70 to 85 (LEEEPEIQEEADEGAP) the composition is skewed to acidic residues. The segment covering 87–166 (IDQKIDFDDK…AEDERKKREQ (80 aa)) has biased composition (basic and acidic residues).

It belongs to the DDRGK1 family. As to quaternary structure, interacts with Atg9; the interaction is transient.

The protein localises to the endoplasmic reticulum membrane. Functionally, substrate adapter for ufmylation, the covalent attachment of the ubiquitin-like modifier UFM1 to substrate proteins. Required for ufmylation of Atg9; protects the nervous system during aging, possibly by stabilizing Atg9 and supporting its function. This Bombyx mori (Silk moth) protein is DDRGK domain-containing protein 1.